The following is a 74-amino-acid chain: MSVNGAVWGRVRSRFRAFPEHLAACGAEASAYGKCVQASTAPGGRLSKDLCVREFEALRSCFAAAAKKTMMGGS.

Residues 22–69 (LAACGAEASAYGKCVQASTAPGGRLSKDLCVREFEALRSCFAAAAKKT) enclose the CHCH domain. 2 consecutive short sequence motifs (cx9C motif) follow at residues 25 to 35 (CGAEASAYGKC) and 51 to 61 (CVREFEALRSC). 2 cysteine pairs are disulfide-bonded: Cys-25/Cys-61 and Cys-35/Cys-51.

In terms of assembly, interacts with NDUFAF5.

The protein resides in the mitochondrion. Functionally, involved in the assembly of mitochondrial NADH:ubiquinone oxidoreductase complex (complex I, MT-ND1). Required to stabilize NDUFAF5. The protein is NADH dehydrogenase [ubiquinone] 1 alpha subcomplex assembly factor 8 of Mus musculus (Mouse).